Reading from the N-terminus, the 537-residue chain is Probable glucomannan 4-beta-mannosyltransferase 15 (537 aa).

Residues 50 to 70 form a helical membrane-spanning segment; the sequence is FIVPLFKCIVVMCLIISLLVF. The active site involves Asp-150. The substrate site is built by Asp-209 and Asp-211. Residue Asp-303 is part of the active site. 4 helical membrane-spanning segments follow: residues 382-402, 418-438, 494-514, and 515-535; these read IVVH…SVFL, VITL…IFWV, EMMM…FGNA, and FLYL…VGFV.

The protein belongs to the glycosyltransferase 2 family. Plant cellulose synthase-like A subfamily.

Its subcellular location is the golgi apparatus membrane. The catalysed reaction is GDP-mannose + (glucomannan)n = GDP + (glucomannan)n+1.. Its function is as follows. Probable mannan synthase which consists of a 4-beta-mannosyltransferase activity on mannan using GDP-mannose. The beta-1,4-mannan product is the backbone for galactomannan synthesis by galactomannan galactosyltransferase. Galactomannan is a noncellulosic polysaccharides of plant cell wall. The chain is Probable glucomannan 4-beta-mannosyltransferase 15 from Arabidopsis thaliana (Mouse-ear cress).